A 428-amino-acid polypeptide reads, in one-letter code: Probable mitochondrial adenine nucleotide transporter BTL3 (428 aa).

Solcar repeat units lie at residues 129–212 (LNTT…YRGQ), 222–307 (TTNF…LKSA), and 336–421 (LGPM…MKVV). A run of 6 helical transmembrane segments spans residues 132–152 (TKHL…IAPL), 187–207 (GNLV…YAYD), 228–248 (FVAG…LDTI), 283–303 (LVPS…VYDI), 342–362 (LLYG…FEVV), and 390–410 (VPAL…SAAI).

It belongs to the mitochondrial carrier (TC 2.A.29) family.

It is found in the mitochondrion inner membrane. Functionally, probable mitochondrial adenylate carrier that catalyzes the transport of ATP, ADP and AMP. The chain is Probable mitochondrial adenine nucleotide transporter BTL3 from Arabidopsis thaliana (Mouse-ear cress).